We begin with the raw amino-acid sequence, 912 residues long: Phosphoenolpyruvate carboxylase (912 aa).

Catalysis depends on residues histidine 138 and lysine 575.

It belongs to the PEPCase type 1 family. Requires Mg(2+) as cofactor.

The catalysed reaction is oxaloacetate + phosphate = phosphoenolpyruvate + hydrogencarbonate. Functionally, forms oxaloacetate, a four-carbon dicarboxylic acid source for the tricarboxylic acid cycle. This chain is Phosphoenolpyruvate carboxylase, found in Lactobacillus helveticus (strain DPC 4571).